The chain runs to 879 residues: Levansucrase (879 aa).

The signal sequence occupies residues 1 to 37 (MTKEHKKMYKAGKYWAVATLVSASILMEVGVTTHADA). Tandem repeats lie at residues 66-81 (DNAT…SIAN), 82-97 (DNAT…SIAN), 98-113 (DNAT…SIAN), 114-129 (DNAT…SVAN), 130-145 (DNAT…SVAN), 146-161 (DNAT…SVAN), and 162-177 (DNAT…SVAN). The interval 66–177 (DNATSGSTKQ…STKQESSVAN (112 aa)) is 7 X 16 AA tandem repeats of D-N-A-T-S-G-S-T-K-Q-E-S-S-[IV]-A-N. 2 stretches are compositionally biased toward polar residues: residues 66 to 180 (DNAT…NDTK) and 189 to 213 (NTSN…AATQ). The segment at 66–213 (DNATSGSTKQ…NNEQPSAATQ (148 aa)) is disordered. Sucrose-binding residues include Trp311, Asp312, and Ser382. The active-site Nucleophile is Asp312. Asp460 provides a ligand contact to Ca(2+). 2 residues coordinate sucrose: Arg465 and Asp466. Ca(2+)-binding residues include Gln491, Leu528, Asn530, and Asp562. Glu563 is a sucrose binding site. Glu565 functions as the Proton donor/acceptor in the catalytic mechanism. Arg583 is a binding site for sucrose. The disordered stretch occupies residues 743–830 (SSGLGLKPHQ…TPAKPVQAGQ (88 aa)). Positions 754–821 (VNPSQPTTPA…KPVNPSQPTT (68 aa)) are enriched in polar residues. The LPXTG sorting signal motif lies at 841–845 (LPQTG). Pentaglycyl murein peptidoglycan amidated threonine is present on Thr844. The propeptide at 845 to 879 (GENNSQSQTMSFIGILLAMFGSLLGFLGIKKRRND) is removed by sortase.

Belongs to the glycosyl hydrolase 68 family.

Its subcellular location is the secreted. It is found in the cell wall. It catalyses the reaction [6)-beta-D-fructofuranosyl-(2-&gt;](n) alpha-D-glucopyranoside + sucrose = [6)-beta-D-fructofuranosyl-(2-&gt;](n+1) alpha-D-glucopyranoside + D-glucose. Ca(2+) may play an important structural role and promote stability of levansucrase. Its function is as follows. Fructosyltransferase that catalyzes the polymerization of the fructose moiety of sucrose to produce levan polymer and the fructo-oligosaccharide (FOS) 1-kestose. Also displays sucrose hydrolase activity. This chain is Levansucrase, found in Fructilactobacillus sanfranciscensis (Lactobacillus sanfranciscensis).